The sequence spans 277 residues: MEMO1 family protein TRQ2_0860 (277 aa).

This sequence belongs to the MEMO1 family.

This Thermotoga sp. (strain RQ2) protein is MEMO1 family protein TRQ2_0860.